The chain runs to 273 residues: Homeobox protein HMX2 (273 aa).

The disordered stretch occupies residues 1 to 154; the sequence is MGSKEDVGKG…TGAAKKKTRT (154 aa). Residues 114 to 123 are compositionally biased toward basic and acidic residues; the sequence is PDFKEEKERL. Positions 149–208 form a DNA-binding region, homeobox; it reads KKKTRTVFSRSQVYQLESTFDMKRYLSSSERACLASSLQLTETQVKTWFQNRRNKWKRQL.

The protein belongs to the HMX homeobox family. Expressed in the developing CNS, including a specific expression in vestibular structures throughout inner ear development.

Its subcellular location is the nucleus. In terms of biological role, transcription factor involved in specification of neuronal cell types and which is required for inner ear and hypothalamus development. This chain is Homeobox protein HMX2 (Hmx2), found in Mus musculus (Mouse).